The primary structure comprises 798 residues: Integrin beta-1-A (798 aa).

An N-terminal signal peptide occupies residues M1–A21. Residues Q22 to P727 lie on the Extracellular side of the membrane. Residues E27–P77 form the PSI domain. Disulfide bonds link C28–C46, C36–C464, C39–C65, C49–C76, C206–C212, C260–C300, C400–C414, C434–C462, C466–C486, C477–C489, C491–C500, C502–C533, C516–C531, C525–C536, C538–C553, C555–C576, C560–C574, C568–C579, C581–C590, C592–C615, C599–C613, C607–C618, C620–C630, C633–C636, C640–C691, C646–C665, C649–C661, and C699–C723. A disordered region spans residues C76 to D106. Residues N109 and N131 are each glycosylated (N-linked (GlcNAc...) asparagine). Residues D139 to L377 enclose the VWFA domain. Residues S151 and S153 each contribute to the Mg(2+) site. 4 residues coordinate Ca(2+): S153, D156, D157, and E188. 2 N-linked (GlcNAc...) asparagine glycosylation sites follow: N211 and N223. Ca(2+) is bound by residues N243, D245, P247, and E248. E248 contacts Mg(2+). N268 and N362 each carry an N-linked (GlcNAc...) asparagine glycan. N-linked (GlcNAc...) asparagine glycosylation occurs at N416. I-EGF domains are found at residues C466–E501, C502–E554, C555–D591, and C592–E631. N481 carries N-linked (GlcNAc...) asparagine glycosylation. N520 is a glycosylation site (N-linked (GlcNAc...) asparagine). N-linked (GlcNAc...) asparagine glycosylation is present at N584. N-linked (GlcNAc...) asparagine glycosylation occurs at N669. A helical transmembrane segment spans residues D728–W751. At K752 to K798 the chain is on the cytoplasmic side. Y783 is modified (phosphotyrosine).

This sequence belongs to the integrin beta chain family. Heterodimer of an alpha and a beta subunit.

It is found in the cell membrane. The protein resides in the cell projection. The protein localises to the invadopodium membrane. Its subcellular location is the ruffle membrane. It localises to the melanosome. It is found in the cleavage furrow. The protein resides in the lamellipodium. The protein localises to the ruffle. Functionally, beta integrins associate with alpha subunits to form receptor complexes that recognize the sequence R-G-D in a wide array of ligands. May be involved in osteoblast compaction. May play role in myoblast differentiation and fusion during skeletal myogenesis. In Xenopus laevis (African clawed frog), this protein is Integrin beta-1-A (itgb1-a).